Reading from the N-terminus, the 257-residue chain is Small ribosomal subunit protein uS2 (257 aa).

Belongs to the universal ribosomal protein uS2 family.

The chain is Small ribosomal subunit protein uS2 from Trichlorobacter lovleyi (strain ATCC BAA-1151 / DSM 17278 / SZ) (Geobacter lovleyi).